Reading from the N-terminus, the 244-residue chain is MAGHSKWANIKHKKAKEDAKRGKIFTRLIRELTVAARHGGSDINANPRLRLAVSKAQAENMTKETMERAIKRGAGELDGVQMEEVRFEGYGPSGVAIIVDCLTDNNNRTVGEVRHAFSKCGGNLGTSGSVAFQFKEQGVLFFENVDDEDALMEAALNAGAEDIEFDDKSAEILTAPEEYANVYEALVQAGFTADESEVTLRAENLSAVSLEDAEQVARLLEMLEELDDVQSVVSNADFPEEFEG.

This sequence belongs to the TACO1 family.

The protein localises to the cytoplasm. This Dichelobacter nodosus (strain VCS1703A) protein is Probable transcriptional regulatory protein DNO_1179.